The chain runs to 438 residues: MAMLPQEVIRKKRDGGRLVPAEIAGFIEGLADGSISEGQAAAFAMAVWFSGMSRDECVALTLAMRDSGETLDWGEFGRPVVDKHSTGGVGDNVSLMLAPIVAACGPVVPMISGRGLGHTGGTLDKLESIPGYNIQPSPELFRRVVDEVGCAIIGQTANLAPADKRLYAIRDVTATVDSVPLITASILSKKLAAGLQSLVLDVKLGNGSFMTDPAETEILARSLVEVANGAGVRTSALITDMNEPLADAAGNALEVENCLAYLSGKKAGTRLDRVVMAFAAEMLAAAGVSAHKAEGEAMARRALESGEALERFGLMVHRLGGPADFVERPEAYLERAPAIVPVAAARDGYLAACETRELGMAVIALGGGRRRPDDRIDHRVGLAGLRPLRTKVEKGEPIAFVHGADRDQAEAVAKRVATLYAIAEEAPAQRPVIASRLV.

This sequence belongs to the thymidine/pyrimidine-nucleoside phosphorylase family. Homodimer.

The enzyme catalyses thymidine + phosphate = 2-deoxy-alpha-D-ribose 1-phosphate + thymine. It functions in the pathway pyrimidine metabolism; dTMP biosynthesis via salvage pathway; dTMP from thymine: step 1/2. Its function is as follows. The enzymes which catalyze the reversible phosphorolysis of pyrimidine nucleosides are involved in the degradation of these compounds and in their utilization as carbon and energy sources, or in the rescue of pyrimidine bases for nucleotide synthesis. The sequence is that of Thymidine phosphorylase from Sinorhizobium medicae (strain WSM419) (Ensifer medicae).